The primary structure comprises 496 residues: MIKIINLKKFLFPWISTDISKIKLNSIKLNSKKIIKNDIFIALYGNCNHGKNFIFEAIKNGSSIILIETKNILKHGIIYFIKNIPIIYFYNLNYSLSELSGKFYLHPSRYMNVIGITGTNGKTTISHFIAKWLFLLGEKIGIIGTLGYGCLNKMKKSKNTTNSAIKCQKLLNFFLKKNINTVVMEVSSHGLHQNRVNNINFFSAIFSNLSQDHIDYHKNMMQYEQSKWKLFSKLNVYKYIINYDDVIGKNWIKKIPNSIIVSTKKNSIKKFKNLKMYVKDIFFHYFGTKLSISSSWGSCVINTKIFGEFNINNLLLSFVALLTLGYNFKSLANVAENLTMPNGRMKIFYVKKIPRVIVDYAHTPDALEKVLSAIKLHFKKNIWSIFGCGGDRDKSKRRVMGKICDLYSINIILTNDNPRSESETKIFNDIKIGIKNLNKVNIIPSREHAIKFAIDNSNEKDIVLILGKGHEEHQVFKYKKVFFSDQILVNKILYKT.

UDP-N-acetyl-alpha-D-muramoyl-L-alanyl-D-glutamate contacts are provided by L29 and S31. 118–124 (GTNGKTT) is a binding site for ATP. Residues N159, 160-161 (TT), S187, Q193, and R195 contribute to the UDP-N-acetyl-alpha-D-muramoyl-L-alanyl-D-glutamate site. The residue at position 227 (K227) is an N6-carboxylysine. Residues R392, 416–419 (DNPR), G467, and E471 each bind meso-2,6-diaminopimelate. The Meso-diaminopimelate recognition motif motif lies at 416 to 419 (DNPR).

Belongs to the MurCDEF family. MurE subfamily. Requires Mg(2+) as cofactor. Post-translationally, carboxylation is probably crucial for Mg(2+) binding and, consequently, for the gamma-phosphate positioning of ATP.

Its subcellular location is the cytoplasm. The enzyme catalyses UDP-N-acetyl-alpha-D-muramoyl-L-alanyl-D-glutamate + meso-2,6-diaminopimelate + ATP = UDP-N-acetyl-alpha-D-muramoyl-L-alanyl-gamma-D-glutamyl-meso-2,6-diaminopimelate + ADP + phosphate + H(+). The protein operates within cell wall biogenesis; peptidoglycan biosynthesis. Functionally, catalyzes the addition of meso-diaminopimelic acid to the nucleotide precursor UDP-N-acetylmuramoyl-L-alanyl-D-glutamate (UMAG) in the biosynthesis of bacterial cell-wall peptidoglycan. This is UDP-N-acetylmuramoyl-L-alanyl-D-glutamate--2,6-diaminopimelate ligase from Wigglesworthia glossinidia brevipalpis.